Reading from the N-terminus, the 312-residue chain is MEEECRVLSIQSHVIRGYVGNRAATFPLQVLGFEIDAVNSVQFSNHTGYAHWKGQVLNSDELQELYEGLRLNNMNKYDYVLTGYTRDKSFLAMVVDIVQELKQQNPRLVYVCDPVLGDKWDGEGSMYVPEDLLPVYKEKVVPLADIITPNQFEAELLSGRKIHSQEEALRVMDMLHSMGPDTVVITSSDLPSPQGSNYLIVLGSQRRRNPAGSVVMERIRMDIRKVDAVFVGTGDLFAAMLLAWTHKHPNNLKVACEKTVSTLHHVLQRTIQCAKAQAGEGVRPSPMQLELRMVQSKRDIEDPEIVVQATVL.

Met1 carries the N-acetylmethionine modification. Ser12 and Thr47 together coordinate pyridoxal. Thr47 contacts pyridoxal 5'-phosphate. Ser59 carries the post-translational modification Phosphoserine. Asp113 provides a ligand contact to ATP. Asp113 contributes to the Na(+) binding site. A Mg(2+)-binding site is contributed by Asp118. Thr148 serves as a coordination point for Na(+). 150–153 (NQFE) contributes to the ATP binding site. The residue at position 164 (Ser164) is a Phosphoserine. Residue Thr186 coordinates Na(+). Residue 186–187 (TS) participates in ATP binding. The residue at position 213 (Ser213) is a Phosphoserine. ATP contacts are provided by residues 226 to 228 (VDA) and Thr233. 234 to 235 (GD) provides a ligand contact to pyridoxal 5'-phosphate. The Proton acceptor role is filled by Asp235. Ser285 is modified (phosphoserine).

It belongs to the pyridoxine kinase family. In terms of assembly, homodimer. Mg(2+) is required as a cofactor. Zn(2+) serves as cofactor. Requires Co(2+) as cofactor. The cofactor is Mn(2+). Ubiquitous. Highly expressed in testis. In terms of tissue distribution, in adult testis and spermatozoa.

It is found in the cytoplasm. Its subcellular location is the cytosol. It catalyses the reaction pyridoxal + ATP = pyridoxal 5'-phosphate + ADP + H(+). The catalysed reaction is pyridoxamine + ATP = pyridoxamine 5'-phosphate + ADP + H(+). It carries out the reaction pyridoxine + ATP = pyridoxine 5'-phosphate + ADP + H(+). It functions in the pathway cofactor metabolism; pyridoxal 5'-phosphate salvage; pyridoxal 5'-phosphate from pyridoxal: step 1/1. Its pathway is cofactor metabolism; pyridoxal 5'-phosphate salvage; pyridoxine 5'-phosphate from pyridoxine: step 1/1. It participates in cofactor metabolism; pyridoxal 5'-phosphate salvage; pyridoxamine 5'-phosphate from pyridoxamine: step 1/1. Its activity is regulated as follows. Catalytic activity is inhibited competitively by 4-deoxypyridoxine, and is also inhibited by the benzodiazepine receptor ligands 1012S and ethyl-beta-carboline-3-carboxylate. Inhibited by ginkgotoxin, theophylline, lamotrigine, enprofylline, theobromine, and caffeine. Activity is increased in the presence of K(+)or Na(+). Functionally, catalyzes the phosphorylation of the dietary vitamin B6 vitamers pyridoxal (PL), pyridoxine (PN) and pyridoxamine (PM) to form pyridoxal 5'-phosphate (PLP), pyridoxine 5'-phosphate (PNP) and pyridoxamine 5'-phosphate (PMP), respectively. PLP is the active form of vitamin B6, and acts as a cofactor for over 140 different enzymatic reactions. The chain is Pyridoxal kinase from Homo sapiens (Human).